A 214-amino-acid polypeptide reads, in one-letter code: Small ribosomal subunit protein uS3c (214 aa).

The 73-residue stretch at 39–111 (IRTYLNKLAK…QITINVVEVE (73 aa)) folds into the KH type-2 domain.

The protein belongs to the universal ribosomal protein uS3 family. Part of the 30S ribosomal subunit.

Its subcellular location is the plastid. The protein resides in the chloroplast. The chain is Small ribosomal subunit protein uS3c (rps3) from Thalassiosira pseudonana (Marine diatom).